Reading from the N-terminus, the 141-residue chain is Large ribosomal subunit protein uL11 (141 aa).

It belongs to the universal ribosomal protein uL11 family. Part of the ribosomal stalk of the 50S ribosomal subunit. Interacts with L10 and the large rRNA to form the base of the stalk. L10 forms an elongated spine to which L12 dimers bind in a sequential fashion forming a multimeric L10(L12)X complex. One or more lysine residues are methylated.

In terms of biological role, forms part of the ribosomal stalk which helps the ribosome interact with GTP-bound translation factors. This is Large ribosomal subunit protein uL11 from Alkaliphilus metalliredigens (strain QYMF).